The primary structure comprises 412 residues: Phytoene synthase, chloroplastic (412 aa).

It belongs to the phytoene/squalene synthase family. Monomer. In terms of tissue distribution, expressed in roots, leaves, flower buds, sepals, petals, lips and lip crests.

It localises to the plastid. The protein resides in the chloroplast. It catalyses the reaction 2 (2E,6E,10E)-geranylgeranyl diphosphate = 15-cis-phytoene + 2 diphosphate. The protein operates within carotenoid biosynthesis; phytoene biosynthesis; all-trans-phytoene from geranylgeranyl diphosphate: step 1/1. Catalyzes the reaction from prephytoene diphosphate to phytoene. The protein is Phytoene synthase, chloroplastic (PSY) of Oncidium hybrid cultivar (Orchid).